The chain runs to 136 residues: Large ribosomal subunit protein eL27B (136 aa).

It belongs to the eukaryotic ribosomal protein eL27 family. As to quaternary structure, component of the large ribosomal subunit (LSU). Mature yeast ribosomes consist of a small (40S) and a large (60S) subunit. The 40S small subunit contains 1 molecule of ribosomal RNA (18S rRNA) and at least 33 different proteins. The large 60S subunit contains 3 rRNA molecules (25S, 5.8S and 5S rRNA) and at least 46 different proteins.

Its subcellular location is the cytoplasm. Component of the ribosome, a large ribonucleoprotein complex responsible for the synthesis of proteins in the cell. The small ribosomal subunit (SSU) binds messenger RNAs (mRNAs) and translates the encoded message by selecting cognate aminoacyl-transfer RNA (tRNA) molecules. The large subunit (LSU) contains the ribosomal catalytic site termed the peptidyl transferase center (PTC), which catalyzes the formation of peptide bonds, thereby polymerizing the amino acids delivered by tRNAs into a polypeptide chain. The nascent polypeptides leave the ribosome through a tunnel in the LSU and interact with protein factors that function in enzymatic processing, targeting, and the membrane insertion of nascent chains at the exit of the ribosomal tunnel. This Schizosaccharomyces pombe (strain 972 / ATCC 24843) (Fission yeast) protein is Large ribosomal subunit protein eL27B (rpl2702).